The chain runs to 730 residues: Double-strand break repair protein MRE11 (730 aa).

4 residues coordinate Mn(2+): Asp-17, His-19, Asp-57, and Asn-124. The Proton donor role is filled by His-125. Positions 213, 241, and 243 each coordinate Mn(2+). Positions 521-730 are disordered; that stretch reads LSGQQKQAQR…SMPARKSKRY (210 aa). Residues 581–591 show a composition bias toward acidic residues; that stretch reads GDEDNLFEEEE. Low complexity predominate over residues 595 to 633; the sequence is KTTAKRAPTTRATRKTAAATRATTATKASAPAKKSIAAP. The segment covering 645-659 has biased composition (acidic residues); that stretch reads SAEEEEDVIMDDDDD. The span at 662 to 672 shows a compositional bias: pro residues; it reads PAPPVKAPPPK. A compositionally biased stretch (polar residues) spans 685-704; that stretch reads TRQTTLNFSQAERPTRTTQK. Over residues 708-719 the composition is skewed to acidic residues; sequence ISDDEISEDDAF.

This sequence belongs to the MRE11/RAD32 family. As to quaternary structure, component of the MRN complex composed of two heterodimers RAD50 and MRE11 associated with a single NBS1. Mn(2+) is required as a cofactor.

The protein localises to the nucleus. The protein resides in the chromosome. It is found in the telomere. Functionally, core component of the MRN complex, which plays a central role in double-strand break (DSB) repair, DNA recombination, maintenance of telomere integrity and meiosis. The MRN complex is involved in the repair of DNA double-strand breaks (DSBs) via homologous recombination (HR), an error-free mechanism which primarily occurs during S and G2 phases. The complex (1) mediates the end resection of damaged DNA, which generates proper single-stranded DNA, a key initial steps in HR, and is (2) required for the recruitment of other repair factors and efficient activation of ATM and ATR upon DNA damage. Within the MRN complex, MRE11 possesses both single-strand endonuclease activity and double-strand-specific 3'-5' exonuclease activity. MRE11 first endonucleolytically cleaves the 5' strand at DNA DSB ends to prevent non-homologous end joining (NHEJ) and licence HR. It then generates a single-stranded DNA gap via 3' to 5' exonucleolytic degradation, which is required for single-strand invasion and recombination. In Chaetomium thermophilum (strain DSM 1495 / CBS 144.50 / IMI 039719) (Thermochaetoides thermophila), this protein is Double-strand break repair protein MRE11.